The primary structure comprises 435 residues: BAHD acyltransferase BIA1 (435 aa).

Catalysis depends on proton acceptor residues His151 and Asp369.

This sequence belongs to the plant acyltransferase family. Mostly expressed in roots (particularly in the root elongation zone), and, to a lower extent, in seedling, leaves (especially in hydathodes), siliques (e.g. in developing seeds) and flowers.

The protein localises to the cytoplasm. Functionally, monitors brassinosteroids (BR) responses and homeostasis, particularly in the root and hypocotyl in darkness. Promotes flavonoid biosynthesis. This Arabidopsis thaliana (Mouse-ear cress) protein is BAHD acyltransferase BIA1.